A 371-amino-acid polypeptide reads, in one-letter code: Maltose/maltodextrin import ATP-binding protein MalK (371 aa).

The 231-residue stretch at 4–234 (VQLQNVTKAW…PADRFVAGFI (231 aa)) folds into the ABC transporter domain. 36-43 (GPSGCGKS) is an ATP binding site.

Belongs to the ABC transporter superfamily. Maltooligosaccharide importer (TC 3.A.1.1.1) family. The complex is composed of two ATP-binding proteins (MalK), two transmembrane proteins (MalG and MalK) and a solute-binding protein (MalE).

It localises to the cell inner membrane. The enzyme catalyses D-maltose(out) + ATP + H2O = D-maltose(in) + ADP + phosphate + H(+). Its function is as follows. Part of the ABC transporter complex MalEFGK involved in maltose/maltodextrin import. Responsible for energy coupling to the transport system. The protein is Maltose/maltodextrin import ATP-binding protein MalK of Escherichia coli O6:H1 (strain CFT073 / ATCC 700928 / UPEC).